A 153-amino-acid chain; its full sequence is UPF0756 membrane protein lin1603 (153 aa).

4 consecutive transmembrane segments (helical) span residues 6–26 (MLFLLLFLLLGLIAKNNSLII), 54–74 (WGVTIITVAILIPIATGQIGF), 80–100 (SFKSAAGWIGLGAGIAVSILA), and 117–137 (LVFGTILAVVLFRGIAAGPVI).

This sequence belongs to the UPF0756 family.

It is found in the cell membrane. The sequence is that of UPF0756 membrane protein lin1603 from Listeria innocua serovar 6a (strain ATCC BAA-680 / CLIP 11262).